The primary structure comprises 349 residues: Sensory histidine kinase/phosphatase NtrB (349 aa).

In terms of domain architecture, PAS spans 5-78 (TQPDAGQILN…SLEAGQGFTD (74 aa)). Residues 136–349 (GLAHEIKNPL…EFSVYLPIRK (214 aa)) enclose the Histidine kinase domain. Position 139 is a phosphohistidine; by autocatalysis (His-139). Lys-329 is an ATP binding site.

Post-translationally, autophosphorylated.

It is found in the cytoplasm. It carries out the reaction ATP + protein L-histidine = ADP + protein N-phospho-L-histidine.. Member of the two-component regulatory system NtrB/NtrC, which controls expression of the nitrogen-regulated (ntr) genes in response to nitrogen limitation. Under conditions of nitrogen limitation, NtrB autophosphorylates and transfers the phosphoryl group to NtrC. In the presence of nitrogen, acts as a phosphatase that dephosphorylates and inactivates NtrC. This Escherichia coli O157:H7 protein is Sensory histidine kinase/phosphatase NtrB (glnL).